We begin with the raw amino-acid sequence, 571 residues long: Proline--tRNA ligase (571 aa).

Belongs to the class-II aminoacyl-tRNA synthetase family. ProS type 1 subfamily. Homodimer.

The protein localises to the cytoplasm. It catalyses the reaction tRNA(Pro) + L-proline + ATP = L-prolyl-tRNA(Pro) + AMP + diphosphate. Functionally, catalyzes the attachment of proline to tRNA(Pro) in a two-step reaction: proline is first activated by ATP to form Pro-AMP and then transferred to the acceptor end of tRNA(Pro). As ProRS can inadvertently accommodate and process non-cognate amino acids such as alanine and cysteine, to avoid such errors it has two additional distinct editing activities against alanine. One activity is designated as 'pretransfer' editing and involves the tRNA(Pro)-independent hydrolysis of activated Ala-AMP. The other activity is designated 'posttransfer' editing and involves deacylation of mischarged Ala-tRNA(Pro). The misacylated Cys-tRNA(Pro) is not edited by ProRS. The chain is Proline--tRNA ligase from Pseudomonas fluorescens (strain Pf0-1).